A 252-amino-acid chain; its full sequence is Imidazole glycerol phosphate synthase subunit HisF (252 aa).

Residues D11 and D130 contribute to the active site.

The protein belongs to the HisA/HisF family. In terms of assembly, heterodimer of HisH and HisF.

It is found in the cytoplasm. The catalysed reaction is 5-[(5-phospho-1-deoxy-D-ribulos-1-ylimino)methylamino]-1-(5-phospho-beta-D-ribosyl)imidazole-4-carboxamide + L-glutamine = D-erythro-1-(imidazol-4-yl)glycerol 3-phosphate + 5-amino-1-(5-phospho-beta-D-ribosyl)imidazole-4-carboxamide + L-glutamate + H(+). It participates in amino-acid biosynthesis; L-histidine biosynthesis; L-histidine from 5-phospho-alpha-D-ribose 1-diphosphate: step 5/9. In terms of biological role, IGPS catalyzes the conversion of PRFAR and glutamine to IGP, AICAR and glutamate. The HisF subunit catalyzes the cyclization activity that produces IGP and AICAR from PRFAR using the ammonia provided by the HisH subunit. The protein is Imidazole glycerol phosphate synthase subunit HisF of Bacillus pumilus (strain SAFR-032).